We begin with the raw amino-acid sequence, 132 residues long: NADH-quinone oxidoreductase subunit I 1 (132 aa).

4Fe-4S ferredoxin-type domains follow at residues Leu-42–Gly-71 and Glu-81–Gln-110. The [4Fe-4S] cluster site is built by Cys-51, Cys-54, Cys-57, Cys-61, Cys-90, Cys-93, Cys-96, and Cys-100.

This sequence belongs to the complex I 23 kDa subunit family. In terms of assembly, NDH-1 is composed of 14 different subunits. Subunits NuoA, H, J, K, L, M, N constitute the membrane sector of the complex. [4Fe-4S] cluster serves as cofactor.

The protein localises to the cell inner membrane. The enzyme catalyses a quinone + NADH + 5 H(+)(in) = a quinol + NAD(+) + 4 H(+)(out). In terms of biological role, NDH-1 shuttles electrons from NADH, via FMN and iron-sulfur (Fe-S) centers, to quinones in the respiratory chain. The immediate electron acceptor for the enzyme in this species is believed to be ubiquinone. Couples the redox reaction to proton translocation (for every two electrons transferred, four hydrogen ions are translocated across the cytoplasmic membrane), and thus conserves the redox energy in a proton gradient. This is NADH-quinone oxidoreductase subunit I 1 from Geobacter sulfurreducens (strain ATCC 51573 / DSM 12127 / PCA).